The sequence spans 83 residues: Exodeoxyribonuclease 7 small subunit (83 aa).

The interval 1 to 25 (MQDELFETEKAPPKNAKNAPKKSFE) is disordered.

It belongs to the XseB family. In terms of assembly, heterooligomer composed of large and small subunits.

It is found in the cytoplasm. It carries out the reaction Exonucleolytic cleavage in either 5'- to 3'- or 3'- to 5'-direction to yield nucleoside 5'-phosphates.. Functionally, bidirectionally degrades single-stranded DNA into large acid-insoluble oligonucleotides, which are then degraded further into small acid-soluble oligonucleotides. The sequence is that of Exodeoxyribonuclease 7 small subunit from Helicobacter pylori (strain P12).